Here is a 202-residue protein sequence, read N- to C-terminus: Ras-related protein RABD2b (202 aa).

Residues 15 to 23 (GDSGVGKSC), 33 to 40 (YLDSYIST), 63 to 67 (DTAGQ), 121 to 124 (NKND), and 151 to 153 (SAK) contribute to the GTP site. Positions 37–45 (YISTIGVDF) match the Effector region motif. A disordered region spans residues 174–202 (ASQPAGGAKPPTVQIRGQPVNQQSGCCSS). Residues 192 to 202 (PVNQQSGCCSS) show a composition bias toward polar residues. 2 S-geranylgeranyl cysteine lipidation sites follow: cysteine 199 and cysteine 200.

This sequence belongs to the small GTPase superfamily. Rab family.

The protein resides in the golgi apparatus. The protein localises to the trans-Golgi network membrane. Its subcellular location is the golgi apparatus membrane. Its function is as follows. Protein transport. Regulator of membrane traffic from the Golgi apparatus towards the endoplasmic reticulum (ER). This Arabidopsis thaliana (Mouse-ear cress) protein is Ras-related protein RABD2b (RABD2B).